Consider the following 134-residue polypeptide: Terepressin/terephysin (134 aa).

Residues 1 to 33 (MKCSVLPRSRLSWTMCVLLLPLLMLMLEGGVQG) form the signal peptide. The cysteines at positions 34 and 39 are disulfide-linked. The propeptide occupies 44-50 (KRAVDSV). Disulfide bonds link cysteine 56/cysteine 100, cysteine 59/cysteine 73, cysteine 67/cysteine 90, cysteine 74/cysteine 80, cysteine 107/cysteine 121, cysteine 115/cysteine 133, and cysteine 122/cysteine 127.

Belongs to the vasopressin/oxytocin family. Contains 7 disulfide bonds. As to expression, expressed by the venom duct.

It localises to the secreted. In Terebra subulata (Chocolate spotted auger), this protein is Terepressin/terephysin.